A 185-amino-acid chain; its full sequence is Ribosome-recycling factor (185 aa).

This sequence belongs to the RRF family.

The protein localises to the cytoplasm. In terms of biological role, responsible for the release of ribosomes from messenger RNA at the termination of protein biosynthesis. May increase the efficiency of translation by recycling ribosomes from one round of translation to another. In Clostridium kluyveri (strain NBRC 12016), this protein is Ribosome-recycling factor.